Here is a 118-residue protein sequence, read N- to C-terminus: Turripeptide NCR-01 (118 aa).

The N-terminal stretch at 1–16 (MLRLILAVALVAACLA) is a signal peptide. The interval 63 to 118 (QGFQGFLPQPHQKRDSYQHGGYQHQQSFDNFQGSGGMNNDNSDDSFALRNFNNDGY) is disordered. Residues 85–102 (QHQQSFDNFQGSGGMNND) are compositionally biased toward polar residues.

As to expression, expressed by the venom duct.

It is found in the secreted. In Gemmula speciosa (Splendid gem-turris), this protein is Turripeptide NCR-01.